Here is a 183-residue protein sequence, read N- to C-terminus: Beta-defensin 129 (183 aa).

Positions 1–19 (MKLLFPIFASLMLQYQVNT) are cleaved as a signal peptide. 3 disulfide bridges follow: Cys-27–Cys-53, Cys-34–Cys-48, and Cys-38–Cys-54. The tract at residues 141-183 (TATSTKSNTKESRDSATASPPPAPPPPNILPTPSLELEEAEEQ) is disordered. Residues 159–170 (SPPPAPPPPNIL) show a composition bias toward pro residues.

Belongs to the beta-defensin family.

Its subcellular location is the secreted. In terms of biological role, has antibacterial activity. The chain is Beta-defensin 129 (DEFB129) from Pan troglodytes (Chimpanzee).